The chain runs to 190 residues: RRP15-like protein (190 aa).

Over residues 1-11 (MSTKNRDRLVV) the composition is skewed to basic and acidic residues. 2 disordered regions span residues 1 to 69 (MSTK…TRKE) and 119 to 190 (QKTM…SDED). Residues 55–66 (QRKKKKVIKKLT) show a composition bias toward basic residues. Residues 59 to 84 (KKVIKKLTRKEQSLKHSVKEYRIKLA) are a coiled coil. Positions 119–153 (QKTMSDAVKEKMTARDRKEARERFDGKNFDSDKFA) are enriched in basic and acidic residues. Residues 167–190 (GEEEDEQMNIGDDEIDAGNYSDED) show a composition bias toward acidic residues.

Belongs to the RRP15 family.

The protein is RRP15-like protein of Caenorhabditis briggsae.